The primary structure comprises 351 residues: uncharacterized protein (351 aa).

Mn(2+) contacts are provided by D215, D226, H290, E319, and E333.

This sequence belongs to the peptidase M24B family. Mn(2+) is required as a cofactor.

This is an uncharacterized protein from Staphylococcus haemolyticus (strain JCSC1435).